We begin with the raw amino-acid sequence, 171 residues long: Calcium channel flower homolog (171 aa).

Residues 1–31 lie on the Cytoplasmic side of the membrane; that stretch reads MSGSGAAGAAAGPAPPAQEEGMTWWYRWLCR. A helical membrane pass occupies residues 32–52; that stretch reads LAGVLGAVSCAISGLFNCVTI. Residues 53 to 56 are Extracellular-facing; that stretch reads HPLN. The chain crosses the membrane as a helical span at residues 57 to 77; it reads IAAGVWMIMNAFILLLCEAPF. Over 78-101 the chain is Cytoplasmic; the sequence is CCQFVEFANTVAEKVDRLRSWQKA. A helical transmembrane segment spans residues 102–122; the sequence is VFYCGMAIVPIVMSLTLTTLL. Residues 123–124 are Extracellular-facing; the sequence is GN. A helical membrane pass occupies residues 125-141; sequence AIAFATGVLYGLSALGK. Residues 142–171 are Cytoplasmic-facing; that stretch reads KGDAISYARIQQQRQQADEEKLAETFEGEL.

The protein belongs to the calcium channel flower family. Interacts with adaptor protein complex 2 (AP-2). Expressed in neurons in the brain (at protein level). Expressed in neuroblastoma cell lines (at protein level). Expressed in cytotoxic T-lymphoocytes (at protein level). As to expression, low levels of expression in various tissues including the brain, eye, heart, liver and colon. Expression in the heart is at slightly higher levels than isoform 3. Expressed in skin cells. In terms of tissue distribution, very low levels of expression in the brain, liver and eye. Detected at very low levels of expression in skin cells. Expressed in various tissues, with highest levels of expression in the brain and eye. Expressed in skin cells. Low levels of expression in the liver, colon, heart and spleen. As to expression, barely detected in the brain and liver.

The protein localises to the cell membrane. It is found in the vesicle. Functionally, transmembrane protein which mediates synaptic endocytosis and fitness-based cell culling. In response to different stimulus strengths, controls two major modes of synaptic vesicle (SV) retrieval in hippocampal neurons; Clathrin-mediated endocytosis (CME) in response to mild stimulation and activity-dependent bulk endocytosis (ADBE) in response to strong stimulation. In cytotoxic T-lymphoocytes (CTLs) facilitates calcium-dependent endocytosis of cytotoxic granules (CGs) at the immuno synapse. Different isoforms work as fitness fingerprints in 'loser' and 'winner' cells and thereby mediate win/lose decisions as part of the cell competition process. The sequence is that of Calcium channel flower homolog (Cacfd1) from Mus musculus (Mouse).